Reading from the N-terminus, the 258-residue chain is Acyl-[acyl-carrier-protein]--UDP-N-acetylglucosamine O-acyltransferase (258 aa).

Belongs to the transferase hexapeptide repeat family. LpxA subfamily. As to quaternary structure, homotrimer.

The protein resides in the cytoplasm. It catalyses the reaction a (3R)-hydroxyacyl-[ACP] + UDP-N-acetyl-alpha-D-glucosamine = a UDP-3-O-[(3R)-3-hydroxyacyl]-N-acetyl-alpha-D-glucosamine + holo-[ACP]. It participates in glycolipid biosynthesis; lipid IV(A) biosynthesis; lipid IV(A) from (3R)-3-hydroxytetradecanoyl-[acyl-carrier-protein] and UDP-N-acetyl-alpha-D-glucosamine: step 1/6. In terms of biological role, involved in the biosynthesis of lipid A, a phosphorylated glycolipid that anchors the lipopolysaccharide to the outer membrane of the cell. This chain is Acyl-[acyl-carrier-protein]--UDP-N-acetylglucosamine O-acyltransferase, found in Pseudomonas syringae pv. tomato (strain ATCC BAA-871 / DC3000).